The sequence spans 294 residues: Glyceraldehyde-3-phosphate dehydrogenase (294 aa).

Asp-19, Arg-63, and Thr-105 together coordinate NAD(+). D-glyceraldehyde 3-phosphate-binding positions include 134-136 and Thr-165; that span reads SCT. Cys-135 functions as the Nucleophile in the catalytic mechanism. At Lys-177 the chain carries N6-acetyllysine. D-glyceraldehyde 3-phosphate-binding positions include 194-195 and Arg-217; that span reads TG. Lys-234 is modified (N6-acetyllysine).

This sequence belongs to the glyceraldehyde-3-phosphate dehydrogenase family. As to quaternary structure, homotetramer.

The protein resides in the cytoplasm. It catalyses the reaction D-glyceraldehyde 3-phosphate + phosphate + NAD(+) = (2R)-3-phospho-glyceroyl phosphate + NADH + H(+). It functions in the pathway carbohydrate degradation; glycolysis; pyruvate from D-glyceraldehyde 3-phosphate: step 1/5. Its function is as follows. Catalyzes the oxidative phosphorylation of glyceraldehyde 3-phosphate (G3P) to 1,3-bisphosphoglycerate (BPG) using the cofactor NAD. The first reaction step involves the formation of a hemiacetal intermediate between G3P and a cysteine residue, and this hemiacetal intermediate is then oxidized to a thioester, with concomitant reduction of NAD to NADH. The reduced NADH is then exchanged with the second NAD, and the thioester is attacked by a nucleophilic inorganic phosphate to produce BPG. The sequence is that of Glyceraldehyde-3-phosphate dehydrogenase (gap) from Pseudescherichia vulneris (Escherichia vulneris).